The sequence spans 334 residues: Hemin transport system permease protein HmuU (334 aa).

Helical transmembrane passes span 9–29 (LMLG…ANMG), 60–80 (LLAV…QGLF), 96–116 (AALC…LLAL), 117–137 (YSHM…IFTL), 149–169 (LLAG…LTYI), 191–211 (WSTL…GLLQ), 244–264 (AILI…GLVV), 278–298 (WLLP…DTLA), and 306–326 (EMPV…WLIL).

It belongs to the binding-protein-dependent transport system permease family. FecCD subfamily.

Its subcellular location is the cell inner membrane. Part of the binding-protein-dependent transport system for hemin; probably responsible for the translocation of the substrate across the membrane. This chain is Hemin transport system permease protein HmuU (hmuU), found in Yersinia pestis.